The sequence spans 415 residues: Tyrosine--tRNA ligase (415 aa).

Tyrosine 34 is a binding site for L-tyrosine. The short motif at 39–48 (PSADSLHLGN) is the 'HIGH' region element. 2 residues coordinate L-tyrosine: tyrosine 162 and glutamine 166. Residues 224–228 (KFGKS) carry the 'KMSKS' region motif. Lysine 227 is an ATP binding site. Residues 346 to 413 (IKIIDLLNLA…KRNYFLILWN (68 aa)) enclose the S4 RNA-binding domain.

The protein belongs to the class-I aminoacyl-tRNA synthetase family. TyrS type 1 subfamily. As to quaternary structure, homodimer.

The protein resides in the cytoplasm. It catalyses the reaction tRNA(Tyr) + L-tyrosine + ATP = L-tyrosyl-tRNA(Tyr) + AMP + diphosphate + H(+). In terms of biological role, catalyzes the attachment of tyrosine to tRNA(Tyr) in a two-step reaction: tyrosine is first activated by ATP to form Tyr-AMP and then transferred to the acceptor end of tRNA(Tyr). In Ureaplasma parvum serovar 3 (strain ATCC 27815 / 27 / NCTC 11736), this protein is Tyrosine--tRNA ligase.